The sequence spans 33 residues: Photosystem II reaction center protein Psb30 (33 aa).

The helical transmembrane segment at 5 to 25 (VVVQLGSLSLIVLAGPIIVLL) threads the bilayer.

It belongs to the Psb30/Ycf12 family. As to quaternary structure, PSII is composed of 1 copy each of membrane proteins PsbA, PsbB, PsbC, PsbD, PsbE, PsbF, PsbH, PsbI, PsbJ, PsbK, PsbL, PsbM, PsbT, PsbX, PsbY, PsbZ, Psb30/Ycf12, peripheral proteins of the oxygen-evolving complex and a large number of cofactors. It forms dimeric complexes.

The protein resides in the plastid. It is found in the chloroplast thylakoid membrane. Functionally, a core subunit of photosystem II (PSII), probably helps stabilize the reaction center. In Mesostigma viride (Green alga), this protein is Photosystem II reaction center protein Psb30.